A 611-amino-acid polypeptide reads, in one-letter code: UvrABC system protein C (611 aa).

The GIY-YIG domain maps to 6–84; it reads NNPGVYRMFN…IKRLRPRFNV (79 aa). The UVR domain occupies 194-229; sequence QSVKDHLAAAMQAASADLDFEHAAVYRDRLAALSHV.

Belongs to the UvrC family. In terms of assembly, interacts with UvrB in an incision complex.

It is found in the cytoplasm. In terms of biological role, the UvrABC repair system catalyzes the recognition and processing of DNA lesions. UvrC both incises the 5' and 3' sides of the lesion. The N-terminal half is responsible for the 3' incision and the C-terminal half is responsible for the 5' incision. The protein is UvrABC system protein C of Brucella abortus (strain 2308).